The following is a 282-amino-acid chain: NH(3)-dependent NAD(+) synthetase (282 aa).

ATP is bound at residue 51 to 58; sequence GISGGVDS. Asp57 contacts Mg(2+). Arg148 is a deamido-NAD(+) binding site. Thr168 serves as a coordination point for ATP. Glu173 is a Mg(2+) binding site. Residues Lys181 and Asp188 each coordinate deamido-NAD(+). The ATP site is built by Lys197 and Thr219. A deamido-NAD(+)-binding site is contributed by 268–269; that stretch reads HK.

Belongs to the NAD synthetase family. Homodimer.

The enzyme catalyses deamido-NAD(+) + NH4(+) + ATP = AMP + diphosphate + NAD(+) + H(+). The protein operates within cofactor biosynthesis; NAD(+) biosynthesis; NAD(+) from deamido-NAD(+) (ammonia route): step 1/1. In terms of biological role, catalyzes the ATP-dependent amidation of deamido-NAD to form NAD. Uses ammonia as a nitrogen source. The chain is NH(3)-dependent NAD(+) synthetase from Burkholderia cenocepacia (strain ATCC BAA-245 / DSM 16553 / LMG 16656 / NCTC 13227 / J2315 / CF5610) (Burkholderia cepacia (strain J2315)).